A 545-amino-acid chain; its full sequence is Cryptochrome-1 (545 aa).

One can recognise a Photolyase/cryptochrome alpha/beta domain in the interval 3-138 (VNNILWFRHG…KCVEKVSHTL (136 aa)). Residues Arg236, Ser264, Ser266, Gln307, His374, 406–408 (DAD), Cys412, and Asn415 contribute to the FAD site.

This sequence belongs to the DNA photolyase class-1 family. In terms of assembly, interacts with tim and per; promoted by light conditions. Requires FAD as cofactor.

The protein localises to the cytoplasm. Its subcellular location is the perinuclear region. The protein resides in the nucleus. Blue light-dependent regulator that is the input of the circadian feedback loop. Has no photolyase activity for cyclobutane pyrimidine dimers or 6-4 photoproducts. Regulation of expression by light suggests a role in photoreception for locomotor activity rhythms. Functions, together with per, as a transcriptional repressor required for the oscillation of peripheral circadian clocks and for the correct specification of clock cells. Genes directly activated by the transcription factors Clock (Clk) and cycle (cyc) are repressed by cry. This chain is Cryptochrome-1, found in Aedes aegypti (Yellowfever mosquito).